A 332-amino-acid polypeptide reads, in one-letter code: UDP-galactose/UDP-glucose transporter 1 (332 aa).

Helical transmembrane passes span 11–31, 49–69, 80–100, 112–132, 135–155, 206–226, 252–272, and 301–317; these read ILLLALCISGIWSAYIYQGVL, HLAFLNLAQSVVCLIWSYIMI, APWWTYWSAGITNTIGPAMGI, VLAKSSKMIPVMLMGTLVYGI, TFPEYMCTFLVAGGVSIFALL, IMLGMNLWGTIYNMIYMFGLP, ICGAVGQNFIFMTISNFGSLA, and WGCVSMVFGGLAYQIYL. The Di-lysine motif signature appears at 327–332; the sequence is KKKQKS.

It belongs to the nucleotide-sugar transporter family. UDP-galactose:UMP antiporter (TC 2.A.7.11) subfamily.

The protein resides in the endoplasmic reticulum membrane. Functionally, essential sugar transporter required for the transport of UDP-galactose and UDP-glucose from the cytoplasm into the Golgi and the endoplasmic reticulum, to ensure quality control of protein folding. Essential for pollen development and involved in embryo sac progress. This Arabidopsis thaliana (Mouse-ear cress) protein is UDP-galactose/UDP-glucose transporter 1.